The following is a 719-amino-acid chain: Protein lin-15A (719 aa).

4 disordered regions span residues 179–199 (FSHFPSEPSPSKPRATREGSQ), 419–464 (YRDH…SISW), 559–626 (LTTA…PTKT), and 684–719 (AKQVAAAPSEPKHIPPTHMEKKPEELLMDPKPEPIF). The span at 570-579 (STSTDSSSSS) shows a compositional bias: low complexity. The span at 604-617 (LLQNKPTHVESSSP) shows a compositional bias: polar residues. Residues 693 to 719 (EPKHIPPTHMEKKPEELLMDPKPEPIF) are compositionally biased toward basic and acidic residues.

It is found in the nucleus. In terms of biological role, synthetic multivulva (synMuv) class A protein. SynMuv proteins are required to repress the induction of vulval development. Acts redundantly with SynMuv class B protein lin-15B, and lin-35 to negatively regulate vulval development, most likely through antagonization of the Ras-signaling pathway. May also negatively regulate vulval development in association with other SynMuv class B proteins such as dpl-1 and efl-1. Regulates let-23 basal activity. Required for the correct expression and/or stability of lin-56. This is Protein lin-15A from Caenorhabditis elegans.